Here is a 247-residue protein sequence, read N- to C-terminus: Complement C1q subcomponent subunit B (247 aa).

An N-terminal signal peptide occupies residues 1–22; the sequence is MKTPRGSVLVLLLLNLLRVSWA. Q23 bears the Pyrrolidone carboxylic acid mark. 5 positions are modified to 4-hydroxyproline: P29, P32, P35, P47, and P50. The segment at 30–78 is disordered; it reads SIPGIPGIPGKPGSDGKPGTPGTKGEKGLPGLVSHLNENGEKGDPGFPG. Residues 39 to 98 enclose the Collagen-like domain; that stretch reads GKPGSDGKPGTPGTKGEKGLPGLVSHLNENGEKGDPGFPGMPGKVGPKGPIGPKGVPGPP. The segment covering 40 to 52 has biased composition (low complexity); the sequence is KPGSDGKPGTPGT. A 5-hydroxylysine mark is found at K53 and K56. P59 carries the post-translational modification 4-hydroxyproline. Position 71 is a 5-hydroxylysine (K71). Residues P77 and P80 each carry the 4-hydroxyproline modification. A 5-hydroxylysine mark is found at K86 and K92. 4-hydroxyproline occurs at positions 95 and 98. 5-hydroxylysine is present on K104. Residues 111-247 form the C1q domain; sequence KATQKIAFSA…GFMLFPDTEA (137 aa). C175 and C192 are disulfide-bonded. Ca(2+) contacts are provided by D193, Y194, and Q200.

Core component of the complement C1 complex, a calcium-dependent complex composed of 1 molecule of the C1Q subcomplex, 2 molecules of C1R and 2 molecules of C1S. The C1Q subcomplex is composed 18 subunits: 3 chains of C1QA, C1QB, and C1QC trimerize to form 6 collagen-like triple helices connected to six globular ligand-recognition modules (C1q domain). Post-translationally, hydroxylated on lysine and proline residues. Hydroxylated lysine residues can be glycosylated. Bovine C1Q contains up to 66.3 hydroxylysine-galactosylglucose residues. Total percentage hydroxylysine residues glycosylated is 92.0%. Contains no hydroxylysine-monosaccharides.

It localises to the secreted. It is found in the cell surface. Its activity is regulated as follows. The C1Q subcomplex is inhibited by sulfated molecules, such as triterpenoid sulfates, heparan sulfate, or chondroitin sulfates. Its function is as follows. Core component of the complement C1 complex, a multiprotein complex that initiates the classical pathway of the complement system, a cascade of proteins that leads to phagocytosis and breakdown of pathogens and signaling that strengthens the adaptive immune system. The classical complement pathway is initiated by the C1Q subcomplex of the C1 complex, which specifically binds IgG or IgM immunoglobulins complexed with antigens, forming antigen-antibody complexes on the surface of pathogens: C1QA, together with C1QB and C1QC, specifically recognizes and binds the Fc regions of IgG or IgM via its C1q domain. Immunoglobulin-binding activates the proenzyme C1R, which cleaves C1S, initiating the proteolytic cascade of the complement system. The C1Q subcomplex is activated by a hexamer of IgG complexed with antigens, while it is activated by a pentameric IgM. The C1Q subcomplex also recognizes and binds phosphatidylserine exposed on the surface of cells undergoing programmed cell death, possibly promoting activation of the complement system. This Bos taurus (Bovine) protein is Complement C1q subcomponent subunit B (C1QB).